A 101-amino-acid chain; its full sequence is MAKQSMKARDVKRVKLAEKFYAKRVELKKIISDVNASDEDRWDAVLKLQTLPRDSSPSRQRNRCRQTGRPHGVLRKFGLSRIKVREAAMRGEIPGLKKASW.

Belongs to the universal ribosomal protein uS14 family. In terms of assembly, part of the 30S ribosomal subunit. Contacts proteins S3 and S10.

In terms of biological role, binds 16S rRNA, required for the assembly of 30S particles and may also be responsible for determining the conformation of the 16S rRNA at the A site. This is Small ribosomal subunit protein uS14 from Haemophilus influenzae (strain 86-028NP).